Reading from the N-terminus, the 289-residue chain is Shikimate dehydrogenase (NADP(+)) (289 aa).

Shikimate-binding positions include Ser20–Ser22 and Ser67. The active-site Proton acceptor is Lys71. An NADP(+)-binding site is contributed by Asp83. The shikimate site is built by Asn92 and Asp107. NADP(+) is bound by residues Gly132–Ala136 and Val230. Tyr232 contacts shikimate. An NADP(+)-binding site is contributed by Gly253.

This sequence belongs to the shikimate dehydrogenase family. Homodimer.

It carries out the reaction shikimate + NADP(+) = 3-dehydroshikimate + NADPH + H(+). Its pathway is metabolic intermediate biosynthesis; chorismate biosynthesis; chorismate from D-erythrose 4-phosphate and phosphoenolpyruvate: step 4/7. Functionally, involved in the biosynthesis of the chorismate, which leads to the biosynthesis of aromatic amino acids. Catalyzes the reversible NADPH linked reduction of 3-dehydroshikimate (DHSA) to yield shikimate (SA). The polypeptide is Shikimate dehydrogenase (NADP(+)) (Streptococcus suis (strain 98HAH33)).